Consider the following 335-residue polypeptide: Methionine import ATP-binding protein MetN (335 aa).

The ABC transporter domain occupies 2-241; the sequence is IQFKDSYKHY…PQHPTTRSFV (240 aa). 38–45 lines the ATP pocket; that stretch reads GHSGAGKS.

The protein belongs to the ABC transporter superfamily. Methionine importer (TC 3.A.1.24) family. In terms of assembly, the complex is composed of two ATP-binding proteins (MetN), two transmembrane proteins (MetI) and a solute-binding protein (MetQ).

The protein resides in the cell inner membrane. The catalysed reaction is L-methionine(out) + ATP + H2O = L-methionine(in) + ADP + phosphate + H(+). It carries out the reaction D-methionine(out) + ATP + H2O = D-methionine(in) + ADP + phosphate + H(+). Part of the ABC transporter complex MetNIQ involved in methionine import. Responsible for energy coupling to the transport system. This is Methionine import ATP-binding protein MetN from Xylella fastidiosa (strain Temecula1 / ATCC 700964).